We begin with the raw amino-acid sequence, 822 residues long: Molybdenum cofactor sulfurase (822 aa).

Lys239 bears the N6-(pyridoxal phosphate)lysine mark. Cys401 is an active-site residue. The interval 633 to 666 is disordered; the sequence is TRISNPTRSSRRSQRALMPGSFPEDPSPTSEQPP. An MOSC domain is found at 643–820; it reads RRSQRALMPG…VMVGDVVTPQ (178 aa).

It belongs to the class-V pyridoxal-phosphate-dependent aminotransferase family. MOCOS subfamily. Requires pyridoxal 5'-phosphate as cofactor.

The catalysed reaction is Mo-molybdopterin + L-cysteine + AH2 = thio-Mo-molybdopterin + L-alanine + A + H2O. The protein operates within cofactor biosynthesis; molybdopterin biosynthesis. Sulfurates the molybdenum cofactor. Sulfation of molybdenum is essential for xanthine dehydrogenase (XDH) and aldehyde oxidase (ADO) enzymes in which molybdenum cofactor is liganded by 1 oxygen and 1 sulfur atom in active form. The polypeptide is Molybdenum cofactor sulfurase (Aspergillus oryzae (strain ATCC 42149 / RIB 40) (Yellow koji mold)).